The primary structure comprises 87 residues: Protein anon-73B1 (87 aa).

Residues 25–47 form a helical membrane-spanning segment; it reads LLIRYGLYVGALFQFVCISAAVL. Residues 51–87 are disordered; it reads NPDGQSNPESGEVTEREGEPVRTRLHKIRKLEKKKRR. A compositionally biased stretch (basic and acidic residues) spans 63–72; the sequence is VTEREGEPVR. The segment covering 73-87 has biased composition (basic residues); it reads TRLHKIRKLEKKKRR.

Belongs to the UPF0239 family.

It is found in the membrane. This Drosophila melanogaster (Fruit fly) protein is Protein anon-73B1 (anon-73B1).